The following is a 398-amino-acid chain: O-methyltransferase mpaG (398 aa).

Serine 144 serves as a coordination point for (4E,8E)-10-(4,6-dihydroxy-7-methyl-3-oxo-1,3-dihydro-2-benzofuran-5-yl)-4,8-dimethyldeca-4,8-dienoate. Serine 144 is a 4-farnesyl-3,5-dihydroxy-6-methylphthalide binding site. Serine 144 serves as a coordination point for 6-O-desmethylmycophenolate. Asparagine 197 is a binding site for S-adenosyl-L-homocysteine. Tyrosine 199 is a binding site for (4E,8E)-10-(4,6-dihydroxy-7-methyl-3-oxo-1,3-dihydro-2-benzofuran-5-yl)-4,8-dimethyldeca-4,8-dienoate. Tyrosine 199 is a 4-farnesyl-3,5-dihydroxy-6-methylphthalide binding site. Tyrosine 199 is a binding site for 6-O-desmethylmycophenolate. 7 residues coordinate S-adenosyl-L-homocysteine: tyrosine 203, aspartate 237, glycine 239, histidine 244, aspartate 245, aspartate 264, and arginine 265. Aspartate 264 contributes to the S-adenosyl-L-methionine binding site. 2 residues coordinate (4E,8E)-10-(4,6-dihydroxy-7-methyl-3-oxo-1,3-dihydro-2-benzofuran-5-yl)-4,8-dimethyldeca-4,8-dienoate: arginine 265 and glutamine 267. 6-O-desmethylmycophenolate is bound at residue arginine 265. The S-adenosyl-L-homocysteine site is built by aspartate 286, isoleucine 287, and histidine 302. Serine 303 contacts (4E,8E)-10-(4,6-dihydroxy-7-methyl-3-oxo-1,3-dihydro-2-benzofuran-5-yl)-4,8-dimethyldeca-4,8-dienoate. Serine 303 lines the 4-farnesyl-3,5-dihydroxy-6-methylphthalide pocket. Serine 303 is a 6-O-desmethylmycophenolate binding site. Catalysis depends on histidine 306, which acts as the Proton acceptor. Residues glutamate 335 and glutamate 362 contribute to the active site.

This sequence belongs to the class I-like SAM-binding methyltransferase superfamily. Cation-independent O-methyltransferase family. COMT subfamily. In terms of assembly, homodimer.

The protein localises to the cytoplasm. It localises to the cytosol. The catalysed reaction is (4E,8E)-10-(4,6-dihydroxy-7-methyl-3-oxo-1,3-dihydro-2-benzofuran-5-yl)-4,8-dimethyldeca-4,8-dienoate + S-adenosyl-L-methionine = (4E,8E)-10-(4-hydroxy-6-methoxy-7-methyl-3-oxo-1,3-dihydro-2-benzofuran-5-yl)-4,8-dimethyldeca-4,8-dienoate + S-adenosyl-L-homocysteine + H(+). It carries out the reaction 4-farnesyl-3,5-dihydroxy-6-methylphthalide + S-adenosyl-L-methionine = 4-farnesyl-3,5-dihydroxy-6-methoxylphthalide + S-adenosyl-L-homocysteine + H(+). It catalyses the reaction 6-O-desmethylmycophenolate + S-adenosyl-L-methionine = mycophenolate + S-adenosyl-L-homocysteine + H(+). Its pathway is secondary metabolite biosynthesis; terpenoid biosynthesis. Its function is as follows. O-methyltransferase; part of the gene cluster that mediates the biosynthesis of mycophenolic acid (MPA), the first isolated antibiotic natural product in the world obtained from a culture of Penicillium brevicompactum in 1893. MpaG methylates farnesyl-DHMP-3C (FDHMP-3C) to yield MFDHMP-3C. The first step of the pathway is the synthesis of 5-methylorsellinic acid (5MOA) by the cytosolic polyketide synthase mpaC. 5MOA is then converted to the phthalide compound 5,7-dihydroxy-4,6-dimethylphthalide (DHMP) by the endoplasmic reticulum-bound cytochrome P450 monooxygenase mpaDE. MpaDE first catalyzes hydroxylation of 5-MOA to 4,6-dihydroxy-2-(hydroxymethyl)-3-methylbenzoic acid (DHMB). MpaDE then acts as a lactone synthase that catalyzes the ring closure to convert DHMB into DHMP. The next step is the prenylation of DHMP by the Golgi apparatus-associated prenyltransferase mpaA to yield farnesyl-DHMP (FDHMP). The ER-bound oxygenase mpaB then mediates the oxidative cleavage the C19-C20 double bond in FDHMP to yield FDHMP-3C via a mycophenolic aldehyde intermediate. The O-methyltransferase mpaG catalyzes the methylation of FDHMP-3C to yield MFDHMP-3C. MpaG and mpaB can also switch the order in which they act and, in this case, the conversion of FDHMP to MFDHMP-3C can take place via 5-O-methyl-FDHMP (MFDHMP). After the cytosolic methylation of FDHMP-3C, MFDHMP-3C enters into peroxisomes probably via free diffusion due to its low molecular weight. Upon a peroxisomal CoA ligation reaction, catalyzed by a beta-oxidation component enzyme acyl-CoA ligase ACL891, MFDHMP-3C-CoA would then be restricted to peroxisomes for the following beta-oxidation pathway steps. The peroxisomal beta-oxidation machinery than converts MFDHMP-3C-CoA into MPA_CoA, via a beta-oxidation chain-shortening process. Finally mpaH acts as a peroxisomal acyl-CoA hydrolase with high substrate specificity toward MPA-CoA to release the final product MPA. MpaH can also hydrolyze DMMPA-CoA to release demethylmycophenolic acid (DMMPA) that is further converted to MPA by mpaG. This is O-methyltransferase mpaG from Penicillium brevicompactum.